Reading from the N-terminus, the 774-residue chain is Ion-translocating oxidoreductase complex subunit C (774 aa).

4Fe-4S ferredoxin-type domains are found at residues 369–397 and 407–436; these read GEPQEEQSCIRCSACADACPADLLPQQLY and KATTHNIADCIECGACAWVCPSNIPLVQYF. Cysteine 377, cysteine 380, cysteine 383, cysteine 387, cysteine 416, cysteine 419, cysteine 422, and cysteine 426 together coordinate [4Fe-4S] cluster. Positions 602-750 are disordered; it reads KLEQQQANAE…EPEEQIDPRK (149 aa).

The protein belongs to the 4Fe4S bacterial-type ferredoxin family. RnfC subfamily. The complex is composed of six subunits: RsxA, RsxB, RsxC, RsxD, RsxE and RsxG. Requires [4Fe-4S] cluster as cofactor.

It localises to the cell inner membrane. Part of a membrane-bound complex that couples electron transfer with translocation of ions across the membrane. Required to maintain the reduced state of SoxR. The sequence is that of Ion-translocating oxidoreductase complex subunit C from Escherichia coli O6:K15:H31 (strain 536 / UPEC).